Here is a 345-residue protein sequence, read N- to C-terminus: GTPase Obg (345 aa).

The Obg domain occupies 1 to 159; it reads MKFIDEAIIK…RTLRLELKLL (159 aa). The segment at 127-148 is disordered; the sequence is NARFKSSTNRAPRKTTQGKPGE. The span at 130–144 shows a compositional bias: polar residues; the sequence is FKSSTNRAPRKTTQG. In terms of domain architecture, OBG-type G spans 160 to 334; the sequence is ADVGLLGLPN…LIHAVMQYLE (175 aa). Residues 166–173, 191–195, 213–216, 284–287, and 315–317 each bind GTP; these read GLPNAGKS, FTTLH, DIPG, NKTD, and SAL. The Mg(2+) site is built by S173 and T193.

The protein belongs to the TRAFAC class OBG-HflX-like GTPase superfamily. OBG GTPase family. As to quaternary structure, monomer. Mg(2+) serves as cofactor.

The protein resides in the cytoplasm. Its function is as follows. An essential GTPase which binds GTP, GDP and possibly (p)ppGpp with moderate affinity, with high nucleotide exchange rates and a fairly low GTP hydrolysis rate. Plays a role in control of the cell cycle, stress response, ribosome biogenesis and in those bacteria that undergo differentiation, in morphogenesis control. In Nitrosococcus oceani (strain ATCC 19707 / BCRC 17464 / JCM 30415 / NCIMB 11848 / C-107), this protein is GTPase Obg.